The following is a 365-amino-acid chain: DNA replication and repair protein RecF (365 aa).

30-37 (GENGQGKT) serves as a coordination point for ATP.

The protein belongs to the RecF family.

The protein resides in the cytoplasm. Functionally, the RecF protein is involved in DNA metabolism; it is required for DNA replication and normal SOS inducibility. RecF binds preferentially to single-stranded, linear DNA. It also seems to bind ATP. This is DNA replication and repair protein RecF from Desulfitobacterium hafniense (strain DSM 10664 / DCB-2).